A 397-amino-acid polypeptide reads, in one-letter code: Argininosuccinate synthase (397 aa).

8-16 lines the ATP pocket; that stretch reads AYSGGLDTS. L-citrulline is bound by residues tyrosine 86 and serine 91. Residue glycine 116 participates in ATP binding. Threonine 118, asparagine 122, and aspartate 123 together coordinate L-aspartate. An L-citrulline-binding site is contributed by asparagine 122. The L-citrulline site is built by arginine 126, serine 175, serine 184, glutamate 260, and tyrosine 272.

Belongs to the argininosuccinate synthase family. Type 1 subfamily. As to quaternary structure, homotetramer.

The protein resides in the cytoplasm. It carries out the reaction L-citrulline + L-aspartate + ATP = 2-(N(omega)-L-arginino)succinate + AMP + diphosphate + H(+). It participates in amino-acid biosynthesis; L-arginine biosynthesis; L-arginine from L-ornithine and carbamoyl phosphate: step 2/3. The chain is Argininosuccinate synthase from Clostridium botulinum (strain Kyoto / Type A2).